The sequence spans 626 residues: Nuclear RNA export factor 2 (626 aa).

At S34 the chain carries Phosphoserine. An RRM domain is found at 124 to 203; that stretch reads WFKVTIPYGI…IFVNHSTAPY (80 aa). LRR repeat units follow at residues 271–296, 297–320, 321–348, and 349–376; these read ELLS…EKAP, KVKT…VKGL, KLEE…AIRD, and CFPK…ETMK. The NTF2 domain maps to 391 to 541; sequence LVLQFLQQYY…LCIVNDELFV (151 aa). Residues 570 to 625 enclose the TAP-C domain; the sequence is QEQQEMVQAFSAQSGMKLEWSQKCLQDNEWNYTRAGQAFTMLQTEGKIPAEAFKQI.

It belongs to the NXF family. Interacts with NXT1, NXT2, E1B-AP5, the REF proteins and with nucleoporins, Nup62, Nup153 and Nup214. Interacts with LUZP4. As to expression, expressed almost exclusively in testis. Also expressed in several cancers.

It is found in the nucleus. The protein localises to the nucleoplasm. The protein resides in the cytoplasm. Its function is as follows. Involved in the export of mRNA from the nucleus to the cytoplasm. This chain is Nuclear RNA export factor 2 (NXF2), found in Homo sapiens (Human).